Consider the following 313-residue polypeptide: Protein sprouty homolog 2 (313 aa).

Over residues 1–14 (METRVQHGSGSQAL) the composition is skewed to polar residues. 2 disordered regions span residues 1 to 31 (METR…PDLR) and 54 to 146 (EYTE…VADG). Basic and acidic residues-rich tracts occupy residues 17-31 (ARRD…PDLR) and 78-89 (KSERPHGLPEHR). Residues 108–131 (SRSISTVSTGSRSSTRTSTSSNSS) show a composition bias toward low complexity. A compositionally biased stretch (polar residues) spans 132 to 141 (EQRLLGSSSG). The SPR domain occupies 175–289 (RCEDCGKCKC…CYDRVNRPGC (115 aa)).

This sequence belongs to the sprouty family. In terms of tissue distribution, brain and interlimb region.

The protein localises to the cytoplasm. It is found in the membrane. Functionally, acts as an antagonist of FGF-induced retinal lens fiber differentiation. Inhibits TGFB-induced epithelial-to-mesenchymal transition in retinal lens epithelial cells. May play an important role in FGF-mediated patterning of the mid/hindbrain region by acting to modulate the signaling effects of FGF8. This Gallus gallus (Chicken) protein is Protein sprouty homolog 2 (SPRY2).